The sequence spans 256 residues: (E)-benzylidenesuccinyl-CoA hydratase (256 aa).

Glu-110 serves as the catalytic Nucleophile. Glu-130 acts as the Proton acceptor in catalysis.

The protein belongs to the enoyl-CoA hydratase/isomerase family. As to quaternary structure, homotrimer.

It carries out the reaction (2S)-[(R)-hydroxy(phenyl)methyl]succinyl-CoA = (E)-2-benzylidenesuccinyl-CoA + H2O. The protein operates within xenobiotic degradation; toluene degradation. Functionally, involved in an anaerobic toluene degradation pathway. Catalyzes the hydration of (E)-2-benzylidenesuccinyl-CoA to the corresponding alcohol intermediate, 2-(alpha-hydroxybenzyl)succinyl-CoA. Also accepts the N-acetylcysteamine (NAC) thioester of (E)-benzylidenesuccinate. In Thauera aromatica, this protein is (E)-benzylidenesuccinyl-CoA hydratase.